Consider the following 699-residue polypeptide: Methylcrotonoyl-CoA carboxylase subunit alpha, mitochondrial (699 aa).

One can recognise a Biotin carboxylation domain in the interval 30-475 (ITKILIANRG…ETGFIPIHRE (446 aa)). The ATP site is built by K144, E228, and H263. The region spanning 148–345 (KDIMIKAGVP…LVEWQLKVAE (198 aa)) is the ATP-grasp domain. R320 is a catalytic residue. A Biotinyl-binding domain is found at 624–699 (KGADGVLGSL…EDKKTLAVIV (76 aa)). At K665 the chain carries N6-biotinyllysine.

Probably a dodecamer composed of six biotin-containing alpha subunits and six beta subunits. It depends on Mn(2+) as a cofactor. The cofactor is biotin.

Its subcellular location is the mitochondrion matrix. It catalyses the reaction 3-methylbut-2-enoyl-CoA + hydrogencarbonate + ATP = 3-methyl-(2E)-glutaconyl-CoA + ADP + phosphate + H(+). It functions in the pathway amino-acid degradation; L-leucine degradation; (S)-3-hydroxy-3-methylglutaryl-CoA from 3-isovaleryl-CoA: step 2/3. Biotin-attachment subunit of the 3-methylcrotonyl-CoA carboxylase, an enzyme that catalyzes the conversion of 3-methylcrotonyl-CoA to 3-methylglutaconyl-CoA, a critical step for leucine and isovaleric acid catabolism. The protein is Methylcrotonoyl-CoA carboxylase subunit alpha, mitochondrial (mccA) of Dictyostelium discoideum (Social amoeba).